The primary structure comprises 113 residues: Nucleoid-associated protein Syncc9605_0027 (113 aa).

This sequence belongs to the YbaB/EbfC family. In terms of assembly, homodimer.

The protein localises to the cytoplasm. Its subcellular location is the nucleoid. Its function is as follows. Binds to DNA and alters its conformation. May be involved in regulation of gene expression, nucleoid organization and DNA protection. The protein is Nucleoid-associated protein Syncc9605_0027 of Synechococcus sp. (strain CC9605).